The primary structure comprises 72 residues: Aurein-2.3 (72 aa).

A signal peptide spans 1–22 (MAFLKKSLFLVLFLGLVSLSIC). Positions 23–49 (EKEKRQNGEDEDENEAANHEEGSEEKR) are excised as a propeptide. Positions 27-47 (RQNGEDEDENEAANHEEGSEE) are disordered. Positions 38 to 47 (AANHEEGSEE) are enriched in basic and acidic residues. Position 65 is a leucine amide (Leu-65). Residues 69–72 (NDVE) constitute a propeptide that is removed on maturation.

Post-translationally, amidation is essential for antibacterial activity against Gram-positive bacteria. As to expression, expressed by the skin dorsal glands.

The protein localises to the secreted. It localises to the target cell membrane. Functionally, amphipathic alpha-helical antimicrobial peptide with weak to moderate activity against Gram-positive bacteria, and no activity against Gram-negative bacteria. Probably acts by disturbing membrane functions with its amphipathic structure. Strongly inhibits the formation of NO by neuronal nitric oxide synthase (nNOS) at micromolar concentrations. Acts by a non-competitive mechanism, probably by binding to calcium/calmodulin and as a consequence blocking calmodulin attachment to nNOS. The protein is Aurein-2.3 of Ranoidea aurea (Green and golden bell frog).